The chain runs to 228 residues: NAD(P)H-hydrate epimerase (228 aa).

Residues 9-209 (VRAVERLAHR…LLGLTPAFLA (201 aa)) form the YjeF N-terminal domain. A (6S)-NADPHX-binding site is contributed by 53 to 57 (NNGGD). K(+) contacts are provided by Asn-54 and Asp-115. Residues 119–125 (GIGLARP) and Asp-148 each bind (6S)-NADPHX. Ser-151 provides a ligand contact to K(+).

The protein belongs to the NnrE/AIBP family. K(+) serves as cofactor.

The enzyme catalyses (6R)-NADHX = (6S)-NADHX. The catalysed reaction is (6R)-NADPHX = (6S)-NADPHX. Its function is as follows. Catalyzes the epimerization of the S- and R-forms of NAD(P)HX, a damaged form of NAD(P)H that is a result of enzymatic or heat-dependent hydration. This is a prerequisite for the S-specific NAD(P)H-hydrate dehydratase to allow the repair of both epimers of NAD(P)HX. The protein is NAD(P)H-hydrate epimerase of Bordetella bronchiseptica (strain ATCC BAA-588 / NCTC 13252 / RB50) (Alcaligenes bronchisepticus).